Reading from the N-terminus, the 478-residue chain is Putative sulfate transporter YbaR (478 aa).

The next 12 helical transmembrane spans lie at 19-39 (ILAG…FSII), 42-62 (VDPM…SIFG), 65-85 (PGMI…LVAD), 87-107 (GLQY…ILGI), 121-141 (VMIG…LPQF), 143-163 (GASW…YVLP), 168-188 (AVPS…TFHV), 220-240 (IIFP…LLTA), 259-279 (GQGI…CAMI), 295-315 (SAFV…HVVV), 345-365 (APLT…VTDD), and 366-386 (LSKG…AKIS). The STAS domain maps to 389–478 (KIVSHAEDQK…ASKSLMKQMA (90 aa)).

Belongs to the SLC26A/SulP transporter (TC 2.A.53) family.

The protein localises to the cell membrane. The sequence is that of Putative sulfate transporter YbaR (ybaR) from Bacillus subtilis (strain 168).